A 64-amino-acid chain; its full sequence is Weak toxin CM-9a (64 aa).

5 disulfide bridges follow: Cys3/Cys24, Cys6/Cys11, Cys17/Cys41, Cys45/Cys56, and Cys57/Cys62.

The protein belongs to the three-finger toxin family. Ancestral subfamily. Orphan group II sub-subfamily. Expressed by the venom gland.

It localises to the secreted. Functionally, binds with low affinity to muscular (alpha-1-beta-1-delta-epsilon/CHRNA1-CHRNB1-CHRND-CHRNE) and very low affinity to neuronal (alpha-7/CHRNA7) nicotinic acetylcholine receptor (nAChR). This is Weak toxin CM-9a from Naja kaouthia (Monocled cobra).